The primary structure comprises 269 residues: Hydroxyethylthiazole kinase (269 aa).

Residue M42 participates in substrate binding. Residues R118 and S164 each contribute to the ATP site. Residue G191 coordinates substrate.

It belongs to the Thz kinase family. The cofactor is Mg(2+).

The enzyme catalyses 5-(2-hydroxyethyl)-4-methylthiazole + ATP = 4-methyl-5-(2-phosphooxyethyl)-thiazole + ADP + H(+). It participates in cofactor biosynthesis; thiamine diphosphate biosynthesis; 4-methyl-5-(2-phosphoethyl)-thiazole from 5-(2-hydroxyethyl)-4-methylthiazole: step 1/1. Functionally, catalyzes the phosphorylation of the hydroxyl group of 4-methyl-5-beta-hydroxyethylthiazole (THZ). In Listeria monocytogenes serotype 4a (strain HCC23), this protein is Hydroxyethylthiazole kinase.